The primary structure comprises 273 residues: 4-hydroxy-tetrahydrodipicolinate reductase (273 aa).

NAD(+)-binding positions include 12–17 (GAGGRM) and glutamate 38. Arginine 39 contributes to the NADP(+) binding site. NAD(+) contacts are provided by residues 102–104 (GTT) and 126–129 (AANF). The active-site Proton donor/acceptor is the histidine 159. Histidine 160 is a binding site for (S)-2,3,4,5-tetrahydrodipicolinate. Lysine 163 (proton donor) is an active-site residue. 169–170 (GT) lines the (S)-2,3,4,5-tetrahydrodipicolinate pocket.

It belongs to the DapB family. Homotetramer.

The protein resides in the cytoplasm. It catalyses the reaction (S)-2,3,4,5-tetrahydrodipicolinate + NAD(+) + H2O = (2S,4S)-4-hydroxy-2,3,4,5-tetrahydrodipicolinate + NADH + H(+). It carries out the reaction (S)-2,3,4,5-tetrahydrodipicolinate + NADP(+) + H2O = (2S,4S)-4-hydroxy-2,3,4,5-tetrahydrodipicolinate + NADPH + H(+). The protein operates within amino-acid biosynthesis; L-lysine biosynthesis via DAP pathway; (S)-tetrahydrodipicolinate from L-aspartate: step 4/4. In terms of biological role, catalyzes the conversion of 4-hydroxy-tetrahydrodipicolinate (HTPA) to tetrahydrodipicolinate. The sequence is that of 4-hydroxy-tetrahydrodipicolinate reductase from Yersinia pseudotuberculosis serotype O:1b (strain IP 31758).